The following is a 69-amino-acid chain: U-scoloptoxin(21)-Sm2a (69 aa).

The signal sequence occupies residues 1–21 (MFFLGFIIVCASEEQSDNRLP). The interval 46–69 (ANDPNGPGRRRRSPIVREEILRHP) is disordered. Residues 60–69 (IVREEILRHP) are compositionally biased toward basic and acidic residues.

This sequence belongs to the scoloptoxin-21 family. Expressed by the venom gland.

It is found in the secreted. This chain is U-scoloptoxin(21)-Sm2a, found in Scolopendra morsitans (Tanzanian blue ringleg centipede).